The sequence spans 147 residues: Lysozyme C-3 (147 aa).

An N-terminal signal peptide occupies residues 1-18 (MKALIILGFLFLSVAVQG). A C-type lysozyme domain is found at 19–147 (KVFERCELAR…VSSYVQGCTL (129 aa)). 4 cysteine pairs are disulfide-bonded: cysteine 24-cysteine 145, cysteine 48-cysteine 133, cysteine 83-cysteine 99, and cysteine 95-cysteine 113. Residues glutamate 53 and aspartate 71 contribute to the active site.

The protein belongs to the glycosyl hydrolase 22 family. As to quaternary structure, monomer. As to expression, stomach-specific.

The catalysed reaction is Hydrolysis of (1-&gt;4)-beta-linkages between N-acetylmuramic acid and N-acetyl-D-glucosamine residues in a peptidoglycan and between N-acetyl-D-glucosamine residues in chitodextrins.. In terms of biological role, lysozymes have primarily a bacteriolytic function; those in tissues and body fluids are associated with the monocyte-macrophage system and enhance the activity of immunoagents. This Bos taurus (Bovine) protein is Lysozyme C-3 (LYZ3).